Here is a 207-residue protein sequence, read N- to C-terminus: Putative transcriptional regulator (207 aa).

In terms of domain architecture, Response regulatory spans 3-118 (KVLIVDDHPA…ELLLAAKAVL (116 aa)). Residues Asp-9 and Asp-53 each carry the 4-aspartylphosphate modification. One can recognise an HTH luxR-type domain in the interval 140 to 205 (EARMLESLSD…GLIDFARRHE (66 aa)). A DNA-binding region (H-T-H motif) is located at residues 155–174 (LQYLANGNTNKAIAQQLFLS).

Its function is as follows. Probable transcriptional regulator. The sequence is that of Putative transcriptional regulator from Pseudomonas aeruginosa (strain ATCC 15692 / DSM 22644 / CIP 104116 / JCM 14847 / LMG 12228 / 1C / PRS 101 / PAO1).